A 264-amino-acid chain; its full sequence is NAD-capped RNA hydrolase NudC (264 aa).

Arginine 70 serves as a coordination point for substrate. 2 residues coordinate Zn(2+): cysteine 99 and cysteine 102. Residue glutamate 112 participates in substrate binding. Residues cysteine 117 and cysteine 122 each coordinate Zn(2+). Tyrosine 127 is a substrate binding site. The 125-residue stretch at 128 to 252 (PVICPCIIVA…TIALKLIEHT (125 aa)) folds into the Nudix hydrolase domain. Positions 161, 177, and 181 each coordinate a divalent metal cation. The Nudix box signature appears at 162–183 (GFVEVGETFEQAVHREVLEETG). 195–202 (QPWAFPNS) serves as a coordination point for substrate. Glutamate 222 serves as a coordination point for a divalent metal cation. Alanine 245 contacts substrate.

It belongs to the Nudix hydrolase family. NudC subfamily. As to quaternary structure, homodimer. Requires Mg(2+) as cofactor. Mn(2+) is required as a cofactor. Zn(2+) serves as cofactor.

It catalyses the reaction a 5'-end NAD(+)-phospho-ribonucleoside in mRNA + H2O = a 5'-end phospho-adenosine-phospho-ribonucleoside in mRNA + beta-nicotinamide D-ribonucleotide + 2 H(+). It carries out the reaction NAD(+) + H2O = beta-nicotinamide D-ribonucleotide + AMP + 2 H(+). The enzyme catalyses NADH + H2O = reduced beta-nicotinamide D-ribonucleotide + AMP + 2 H(+). In terms of biological role, mRNA decapping enzyme that specifically removes the nicotinamide adenine dinucleotide (NAD) cap from a subset of mRNAs by hydrolyzing the diphosphate linkage to produce nicotinamide mononucleotide (NMN) and 5' monophosphate mRNA. The NAD-cap is present at the 5'-end of some mRNAs and stabilizes RNA against 5'-processing. Has preference for mRNAs with a 5'-end purine. Catalyzes the hydrolysis of a broad range of dinucleotide pyrophosphates. This Pasteurella multocida (strain Pm70) protein is NAD-capped RNA hydrolase NudC.